Reading from the N-terminus, the 130-residue chain is Small ribosomal subunit protein uS9 (130 aa).

Belongs to the universal ribosomal protein uS9 family.

The sequence is that of Small ribosomal subunit protein uS9 from Paracidovorax citrulli (strain AAC00-1) (Acidovorax citrulli).